Consider the following 139-residue polypeptide: Hydrogenase maturation factor HypA (139 aa).

Histidine 2 contributes to the Ni(2+) binding site. Zn(2+)-binding residues include cysteine 73, cysteine 76, cysteine 110, and cysteine 113.

This sequence belongs to the HypA/HybF family.

Its function is as follows. Involved in the maturation of [NiFe] hydrogenases. Required for nickel insertion into the metal center of the hydrogenase. The sequence is that of Hydrogenase maturation factor HypA from Thermococcus onnurineus (strain NA1).